The sequence spans 92 residues: Small ribosomal subunit protein bS20 (92 aa).

The interval M1–K22 is disordered.

Belongs to the bacterial ribosomal protein bS20 family.

Its function is as follows. Binds directly to 16S ribosomal RNA. In Cereibacter sphaeroides (strain ATCC 17029 / ATH 2.4.9) (Rhodobacter sphaeroides), this protein is Small ribosomal subunit protein bS20.